The primary structure comprises 121 residues: Phosphoribosyl-ATP pyrophosphatase (121 aa).

It belongs to the PRA-PH family.

It localises to the cytoplasm. The enzyme catalyses 1-(5-phospho-beta-D-ribosyl)-ATP + H2O = 1-(5-phospho-beta-D-ribosyl)-5'-AMP + diphosphate + H(+). Its pathway is amino-acid biosynthesis; L-histidine biosynthesis; L-histidine from 5-phospho-alpha-D-ribose 1-diphosphate: step 2/9. The sequence is that of Phosphoribosyl-ATP pyrophosphatase from Burkholderia vietnamiensis (strain G4 / LMG 22486) (Burkholderia cepacia (strain R1808)).